The primary structure comprises 746 residues: MVLQARSKHRDAAPRPPRSARSSPPPLSGASEVDAGELGSERTPPSPGRRGAAGRKGPRAGTAAPAPDGLAGRLAAGLHWALGLRRGRGRTWSTLLLASFAALLHWSHITHLFENDRHFSHLSTLEREMAFRTEMGLYYSYFKTIVEAPSFLNGVWMIMNDKLTEYPLVINTLKRFNLYPEVILASWYRIYTKIMDLIGIQTKICWTVTRGEGLSPIESCEGLGDPACFYVAVIFMLNGLMMALFFIYGTYLSGSRLGGVVTVLCFFFNHGECTRVMWTPPLRESFSYPFLVLQMLLVTHILRAPELCRGSLIALCISNVLFMLPWQFAQFVLLTQIASLFAVYVVGYIDTHKLQKIIYMHMISLVLCFVLMFGNSMLLTSYYASSLVIIWGMLAMKPQFLRMNVSELSLWVIQGCGWLFGTVILKSVTSRIFGIADDAHIGNLLTSKFFSYKDFDTLLYTCAAEFDFMEKETPLRYTKTLLLPVVLVTVAAIVRKIFNDMRGVVAKQRTHTRKQQFEHGELVYHALQLLAYTALGVLIMRLKLFLTPHMCVMASLICSRQLFGWLFGKVHPGAVVFAILAAMSIQGSANLQTQWNIVGEFSNLPQEELIEWIRYSTKPDAVFAGAMPTMASVKLSALRPVVNHPHYEDAGLRARTKIVYSMYSRKAPEDVKKELMKLKVNYYILEESWCIRRSKPGCSMPEIWDVEDPDNAGKTPLCNILVKDSKPHFTTVFQNSVYKVLEVLRQ.

A disordered region spans residues 1-68; sequence MVLQARSKHR…RAGTAAPAPD (68 aa). Phosphoserine is present on residues Ser-28 and Ser-31. A compositionally biased stretch (low complexity) spans 59-68; it reads RAGTAAPAPD. A run of 11 helical transmembrane segments spans residues 137 to 159, 227 to 247, 257 to 279, 307 to 325, 331 to 350, 357 to 374, 380 to 396, 405 to 425, 481 to 501, 520 to 540, and 562 to 582; these read LYYSYFKTIVEAPSFLNGVWMIM, ACFYVAVIFMLNGLMMALFFI, LGGVVTVLCFFFNHGECTRVMWT, LCRGSLIALCISNVLFMLP, FVLLTQIASLFAVYVVGYID, IIYMHMISLVLCFVLMFG, TSYYASSLVIIWGMLAM, VSELSLWVIQGCGWLFGTVIL, LLLPVVLVTVAAIVRKIFNDM, GELVYHALQLLAYTALGVLIM, and LFGWLFGKVHPGAVVFAILAA.

It belongs to the dpy-19 family.

It localises to the endoplasmic reticulum membrane. It catalyses the reaction L-tryptophyl-[protein] + a di-trans,poly-cis-dolichyl beta-D-mannosyl phosphate = C-alpha-D-mannosyl-L-tryptophyl-[protein] + a di-trans,poly-cis-dolichyl phosphate + H(+). The protein operates within protein modification; protein glycosylation. In terms of biological role, C-mannosyltransferase that mediates the C-mannosylation tryptophan residues on target proteins. The reaction occurs on the luminal side of the endoplasmic reticulum and involves the transfer of a mannose unit from a dolichylphosphate mannose (Dol-P-Man) donor to an acceptor protein containing a WxxW consensus sequence. C-mannosylates the first two tryptophans in the WxxWxxWxxC sequence motif in thrombospondin (TSP) type-1 repeats of UNC5A. Regulates neurite extension during development. The protein is Protein C-mannosyl-transferase DPY19L1 (Dpy19l1) of Mus musculus (Mouse).